The primary structure comprises 185 residues: CDP-diacylglycerol--glycerol-3-phosphate 3-phosphatidyltransferase (185 aa).

4 helical membrane passes run I7 to L26, F33 to L52, F89 to L108, and I151 to L172.

This sequence belongs to the CDP-alcohol phosphatidyltransferase class-I family.

The protein resides in the cell membrane. It carries out the reaction a CDP-1,2-diacyl-sn-glycerol + sn-glycerol 3-phosphate = a 1,2-diacyl-sn-glycero-3-phospho-(1'-sn-glycero-3'-phosphate) + CMP + H(+). It functions in the pathway phospholipid metabolism; phosphatidylglycerol biosynthesis; phosphatidylglycerol from CDP-diacylglycerol: step 1/2. Its function is as follows. This protein catalyzes the committed step to the synthesis of the acidic phospholipids. The chain is CDP-diacylglycerol--glycerol-3-phosphate 3-phosphatidyltransferase (pgsA) from Haemophilus influenzae (strain ATCC 51907 / DSM 11121 / KW20 / Rd).